A 394-amino-acid chain; its full sequence is S-adenosylmethionine synthase (394 aa).

H18 provides a ligand contact to ATP. Position 20 (D20) interacts with Mg(2+). Residue E46 participates in K(+) binding. The L-methionine site is built by E59 and Q102. The interval 102–112 (QSPDIDMGVSA) is flexible loop. Residues 175–177 (DGK), D250, 256–257 (RK), A273, and K277 each bind ATP. D250 contributes to the L-methionine binding site. K281 provides a ligand contact to L-methionine.

It belongs to the AdoMet synthase family. In terms of assembly, homotetramer; dimer of dimers. Requires Mg(2+) as cofactor. K(+) is required as a cofactor.

The protein localises to the cytoplasm. It catalyses the reaction L-methionine + ATP + H2O = S-adenosyl-L-methionine + phosphate + diphosphate. It participates in amino-acid biosynthesis; S-adenosyl-L-methionine biosynthesis; S-adenosyl-L-methionine from L-methionine: step 1/1. Its function is as follows. Catalyzes the formation of S-adenosylmethionine (AdoMet) from methionine and ATP. The overall synthetic reaction is composed of two sequential steps, AdoMet formation and the subsequent tripolyphosphate hydrolysis which occurs prior to release of AdoMet from the enzyme. This Brachyspira hyodysenteriae (strain ATCC 49526 / WA1) protein is S-adenosylmethionine synthase.